The sequence spans 257 residues: 5-oxoprolinase subunit A (257 aa).

It belongs to the LamB/PxpA family. As to quaternary structure, forms a complex composed of PxpA, PxpB and PxpC.

The enzyme catalyses 5-oxo-L-proline + ATP + 2 H2O = L-glutamate + ADP + phosphate + H(+). In terms of biological role, catalyzes the cleavage of 5-oxoproline to form L-glutamate coupled to the hydrolysis of ATP to ADP and inorganic phosphate. This is 5-oxoprolinase subunit A from Halalkalibacterium halodurans (strain ATCC BAA-125 / DSM 18197 / FERM 7344 / JCM 9153 / C-125) (Bacillus halodurans).